The chain runs to 216 residues: Calcium-binding protein 2 (216 aa).

The interval 1-41 (MGNCAKTPWHRGSKERWQWPGSPLGGSRPSPGPRTEEQEGT) is disordered. A lipid anchor (N-myristoyl glycine) is attached at Gly2. A compositionally biased stretch (low complexity) spans 20–29 (PGSPLGGSRP). EF-hand domains lie at 74 to 109 (EEIEELQIAFQEFDRDRDGYIGYRELGACMRTLGYM), 125 to 142 (GKVDFEDFVELMGPKLLA), 148 to 183 (IGVRELRDAFREFDTNGDGCISVGELRAALKALLGE), and 185 to 216 (LSQREVDEILQDIDLNGDGLVDFEEFVRMMSR). Residues Asp87, Asp89, Asp91, Tyr93, and Glu98 each contribute to the Ca(2+) site. Residues Asp161, Asn163, Asp165, Cys167, Glu172, Asp198, Asn200, Asp202, and Glu209 each coordinate Ca(2+).

As to expression, expressed in the inner hair cells (IHCs), outer hair cells,(OHCs) and vestibular hair cells within the ear and in the retina (at protein level). Expressed in the retinal cone type 6 ON-bipolar cells and type 1 OFF-bipolar cells (at protein level). Expressed in the organ of Corti and spiral ganglion neurons in the cochlea (at protein level).

It is found in the cytoplasm. The protein localises to the perinuclear region. It localises to the cell membrane. Its subcellular location is the golgi apparatus. Its function is as follows. Required for sound encoding at inner hair cells (IHCs) synapses, likely via inhibition of the inactivation of voltage-gated calcium channel of type 1.3 (Cav1.3) in the IHCs. Required for the normal transfer of light signals through the retina. This Mus musculus (Mouse) protein is Calcium-binding protein 2 (Cabp2).